Reading from the N-terminus, the 137-residue chain is MQKTFFIIKPDAVKRHLIGQVLDRIERRGFVIERMEMLMLDEERLKEHYAQLADKPFFPSISEFMMSGPAVIGIMSGPGVIKSWRDMMGATNPGDAAPGTIRGDFATAPDGDMIPNIVHGSDSEESAAREIKIWFGE.

Lysine 9, phenylalanine 57, arginine 85, threonine 91, and arginine 102 together coordinate ATP. Histidine 119 serves as the catalytic Pros-phosphohistidine intermediate.

The protein belongs to the NDK family. Homotetramer. Mg(2+) is required as a cofactor.

The protein localises to the cytoplasm. It catalyses the reaction a 2'-deoxyribonucleoside 5'-diphosphate + ATP = a 2'-deoxyribonucleoside 5'-triphosphate + ADP. It carries out the reaction a ribonucleoside 5'-diphosphate + ATP = a ribonucleoside 5'-triphosphate + ADP. Major role in the synthesis of nucleoside triphosphates other than ATP. The ATP gamma phosphate is transferred to the NDP beta phosphate via a ping-pong mechanism, using a phosphorylated active-site intermediate. This chain is Nucleoside diphosphate kinase, found in Streptococcus thermophilus (strain CNRZ 1066).